The primary structure comprises 320 residues: Malate dehydrogenase (320 aa).

Residues 10–15 and D34 each bind NAD(+); that span reads GSGMIG. 2 residues coordinate substrate: R83 and R89. Residues N96 and 119-121 contribute to the NAD(+) site; that span reads ITN. Residues N121 and R152 each contribute to the substrate site. The active-site Proton acceptor is the H176.

The protein belongs to the LDH/MDH superfamily. MDH type 3 family.

It carries out the reaction (S)-malate + NAD(+) = oxaloacetate + NADH + H(+). In terms of biological role, catalyzes the reversible oxidation of malate to oxaloacetate. The protein is Malate dehydrogenase of Brucella suis (strain ATCC 23445 / NCTC 10510).